The primary structure comprises 92 residues: Small ribosomal subunit protein uS19c (92 aa).

Belongs to the universal ribosomal protein uS19 family.

It is found in the plastid. The protein resides in the chloroplast. Its function is as follows. Protein S19 forms a complex with S13 that binds strongly to the 16S ribosomal RNA. In Ostreococcus tauri, this protein is Small ribosomal subunit protein uS19c.